Reading from the N-terminus, the 487-residue chain is 2-aminomuconic semialdehyde dehydrogenase (487 aa).

209–215 (GTGPRVG) contacts NAD(+). The active-site Proton acceptor is the Glu253. The Nucleophile role is filled by Cys287. The residue at position 362 (Ser362) is a Phosphoserine.

This sequence belongs to the aldehyde dehydrogenase family. In terms of tissue distribution, highly expressed in adult kidney and liver. Detected at lower levels in fetal liver and kidney.

It is found in the cytoplasm. It carries out the reaction 2-aminomuconate 6-semialdehyde + NAD(+) + H2O = (2Z,4E)-2-aminomuconate + NADH + 2 H(+). Its pathway is amino-acid degradation; L-kynurenine degradation. In terms of biological role, catalyzes the NAD-dependent oxidation of 2-aminomuconic semialdehyde of the kynurenine metabolic pathway in L-tryptophan degradation. The sequence is that of 2-aminomuconic semialdehyde dehydrogenase from Homo sapiens (Human).